A 359-amino-acid chain; its full sequence is Mannonate dehydratase (359 aa).

The protein belongs to the mannonate dehydratase family. The cofactor is Fe(2+). Mn(2+) serves as cofactor.

The catalysed reaction is D-mannonate = 2-dehydro-3-deoxy-D-gluconate + H2O. Its pathway is carbohydrate metabolism; pentose and glucuronate interconversion. Functionally, catalyzes the dehydration of D-mannonate. This Moorella thermoacetica (strain ATCC 39073 / JCM 9320) protein is Mannonate dehydratase.